Reading from the N-terminus, the 436-residue chain is Peptidase B (436 aa).

Positions 201 and 206 each coordinate Mn(2+). Residue Lys-213 is part of the active site. The Mn(2+) site is built by Asp-224, Asp-283, and Glu-285. Arg-287 is a catalytic residue.

It belongs to the peptidase M17 family. In terms of assembly, homohexamer. Requires Mn(2+) as cofactor.

The protein localises to the cytoplasm. It carries out the reaction Release of an N-terminal amino acid, Xaa, from a peptide or arylamide. Xaa is preferably Glu or Asp but may be other amino acids, including Leu, Met, His, Cys and Gln.. Its function is as follows. Probably plays an important role in intracellular peptide degradation. This is Peptidase B from Pectobacterium carotovorum subsp. carotovorum (strain PC1).